The sequence spans 285 residues: 4-diphosphocytidyl-2-C-methyl-D-erythritol kinase (285 aa).

Residue lysine 12 is part of the active site. 95-105 (PVGAGLAGGST) lines the ATP pocket. Aspartate 137 is an active-site residue.

It belongs to the GHMP kinase family. IspE subfamily.

It catalyses the reaction 4-CDP-2-C-methyl-D-erythritol + ATP = 4-CDP-2-C-methyl-D-erythritol 2-phosphate + ADP + H(+). Its pathway is isoprenoid biosynthesis; isopentenyl diphosphate biosynthesis via DXP pathway; isopentenyl diphosphate from 1-deoxy-D-xylulose 5-phosphate: step 3/6. In terms of biological role, catalyzes the phosphorylation of the position 2 hydroxy group of 4-diphosphocytidyl-2C-methyl-D-erythritol. This Syntrophomonas wolfei subsp. wolfei (strain DSM 2245B / Goettingen) protein is 4-diphosphocytidyl-2-C-methyl-D-erythritol kinase.